We begin with the raw amino-acid sequence, 100 residues long: Integration host factor subunit alpha (100 aa).

It belongs to the bacterial histone-like protein family. In terms of assembly, heterodimer of an alpha and a beta chain.

This protein is one of the two subunits of integration host factor, a specific DNA-binding protein that functions in genetic recombination as well as in transcriptional and translational control. In Alcanivorax borkumensis (strain ATCC 700651 / DSM 11573 / NCIMB 13689 / SK2), this protein is Integration host factor subunit alpha.